The chain runs to 479 residues: Sucrose-6-phosphate hydrolase (479 aa).

Positions Met1 to His28 are disordered. Substrate-binding positions include Leu40 to Asp43, Gln59, Tyr102 to Ser103, Arg161 to Asp162, and Glu220. Asp43 is a catalytic residue.

The protein belongs to the glycosyl hydrolase 32 family.

It catalyses the reaction Hydrolysis of terminal non-reducing beta-D-fructofuranoside residues in beta-D-fructofuranosides.. It participates in glycan biosynthesis; sucrose metabolism. The polypeptide is Sucrose-6-phosphate hydrolase (sacA) (Bacillus subtilis (strain 168)).